A 138-amino-acid chain; its full sequence is Acidic phospholipase A2 2 (138 aa).

The signal sequence occupies residues 1–16; sequence MRTLWIVAVLLLGVEG. 7 disulfide bridges follow: C42/C131, C44/C60, C59/C111, C65/C138, C66/C104, C73/C97, and C91/C102. Ca(2+) is bound by residues Y43, G45, and G47. H63 is an active-site residue. Position 64 (D64) interacts with Ca(2+). D105 is a catalytic residue.

This sequence belongs to the phospholipase A2 family. Group II subfamily. D49 sub-subfamily. Ca(2+) serves as cofactor. Expressed by the venom gland.

It localises to the secreted. It catalyses the reaction a 1,2-diacyl-sn-glycero-3-phosphocholine + H2O = a 1-acyl-sn-glycero-3-phosphocholine + a fatty acid + H(+). Functionally, snake venom phospholipase A2 (PLA2) that displays edema-inducing activities, exhibits indirect hemolytic activity, and inhibits ADP-induced platelet aggregation. PLA2 catalyzes the calcium-dependent hydrolysis of the 2-acyl groups in 3-sn-phosphoglycerides. This chain is Acidic phospholipase A2 2, found in Protobothrops mucrosquamatus (Taiwan habu).